We begin with the raw amino-acid sequence, 366 residues long: Anhydro-N-acetylmuramic acid kinase (366 aa).

Position 15 to 22 (15 to 22 (GTSLDGVD)) interacts with ATP.

This sequence belongs to the anhydro-N-acetylmuramic acid kinase family.

The catalysed reaction is 1,6-anhydro-N-acetyl-beta-muramate + ATP + H2O = N-acetyl-D-muramate 6-phosphate + ADP + H(+). Its pathway is amino-sugar metabolism; 1,6-anhydro-N-acetylmuramate degradation. The protein operates within cell wall biogenesis; peptidoglycan recycling. Functionally, catalyzes the specific phosphorylation of 1,6-anhydro-N-acetylmuramic acid (anhMurNAc) with the simultaneous cleavage of the 1,6-anhydro ring, generating MurNAc-6-P. Is required for the utilization of anhMurNAc either imported from the medium or derived from its own cell wall murein, and thus plays a role in cell wall recycling. This chain is Anhydro-N-acetylmuramic acid kinase, found in Hydrogenovibrio crunogenus (strain DSM 25203 / XCL-2) (Thiomicrospira crunogena).